We begin with the raw amino-acid sequence, 232 residues long: LexA repressor (232 aa).

The disordered stretch occupies residues 1 to 25 (MSDDSSDSTDAPGTSRSRDSGLTER). Over residues 16–25 (RSRDSGLTER) the composition is skewed to basic and acidic residues. The segment at residues 46–66 (IREIGDAVGLTSTSSVAHQLR) is a DNA-binding region (H-T-H motif). Catalysis depends on for autocatalytic cleavage activity residues S156 and K193.

The protein belongs to the peptidase S24 family. Homodimer.

It catalyses the reaction Hydrolysis of Ala-|-Gly bond in repressor LexA.. Its function is as follows. Represses a number of genes involved in the response to DNA damage (SOS response), including recA and lexA. In the presence of single-stranded DNA, RecA interacts with LexA causing an autocatalytic cleavage which disrupts the DNA-binding part of LexA, leading to derepression of the SOS regulon and eventually DNA repair. This chain is LexA repressor, found in Mycolicibacterium gilvum (strain PYR-GCK) (Mycobacterium gilvum (strain PYR-GCK)).